Reading from the N-terminus, the 420-residue chain is Glyceraldehyde-3-phosphate dehydrogenase GAPCP2, chloroplastic (420 aa).

The N-terminal 66 residues, 1–66, are a transit peptide targeting the chloroplast; the sequence is MALSSLLRSA…YNAKRVQPIK (66 aa). Residues 94–95, D116, and R162 contribute to the NAD(+) site; that span reads RI. D-glyceraldehyde 3-phosphate-binding positions include 233-235, T264, 293-294, and R316; these read SCT and TG. The active-site Nucleophile is the C234. N398 contacts NAD(+).

The protein belongs to the glyceraldehyde-3-phosphate dehydrogenase family. In terms of assembly, homotetramer. Expressed in shoot and root vasculature, leaf veins and vascular tissue of flowers and siliques.

The protein localises to the plastid. It localises to the chloroplast stroma. It carries out the reaction D-glyceraldehyde 3-phosphate + phosphate + NAD(+) = (2R)-3-phospho-glyceroyl phosphate + NADH + H(+). Its function is as follows. Involved in plastidial glycolytic pathway and plays a specific role in glycolytic energy production in non-green plastids and chloroplasts. Essential for breakdown of starch to form sucrose for export to non-photosynthetic tissues, and to generate primary metabolites for anabolic pathways such as fatty acid and amino acid synthesis. Plays an important role in plant development by providing substrates for the phosphorylated pathway of serine biosynthesis in roots. Plays a crucial role in pollen development. Functionally redundant with GAPCP1. This Arabidopsis thaliana (Mouse-ear cress) protein is Glyceraldehyde-3-phosphate dehydrogenase GAPCP2, chloroplastic (GAPCP2).